Reading from the N-terminus, the 268-residue chain is Hydroxyethylthiazole kinase (268 aa).

Residue methionine 45 coordinates substrate. Residues arginine 121 and threonine 167 each contribute to the ATP site. Position 194 (glycine 194) interacts with substrate.

Belongs to the Thz kinase family. It depends on Mg(2+) as a cofactor.

It carries out the reaction 5-(2-hydroxyethyl)-4-methylthiazole + ATP = 4-methyl-5-(2-phosphooxyethyl)-thiazole + ADP + H(+). It participates in cofactor biosynthesis; thiamine diphosphate biosynthesis; 4-methyl-5-(2-phosphoethyl)-thiazole from 5-(2-hydroxyethyl)-4-methylthiazole: step 1/1. In terms of biological role, catalyzes the phosphorylation of the hydroxyl group of 4-methyl-5-beta-hydroxyethylthiazole (THZ). The polypeptide is Hydroxyethylthiazole kinase (Bacillus cereus (strain ZK / E33L)).